The sequence spans 130 residues: Small ribosomal subunit protein uS9 (130 aa).

This sequence belongs to the universal ribosomal protein uS9 family.

The sequence is that of Small ribosomal subunit protein uS9 from Halalkalibacterium halodurans (strain ATCC BAA-125 / DSM 18197 / FERM 7344 / JCM 9153 / C-125) (Bacillus halodurans).